A 313-amino-acid chain; its full sequence is Ribosomal protein L11 methyltransferase (313 aa).

Positions 161, 182, 204, and 247 each coordinate S-adenosyl-L-methionine.

The protein belongs to the methyltransferase superfamily. PrmA family.

It localises to the cytoplasm. The enzyme catalyses L-lysyl-[protein] + 3 S-adenosyl-L-methionine = N(6),N(6),N(6)-trimethyl-L-lysyl-[protein] + 3 S-adenosyl-L-homocysteine + 3 H(+). In terms of biological role, methylates ribosomal protein L11. The protein is Ribosomal protein L11 methyltransferase of Halalkalibacterium halodurans (strain ATCC BAA-125 / DSM 18197 / FERM 7344 / JCM 9153 / C-125) (Bacillus halodurans).